The following is a 143-amino-acid chain: MFSIKSIQLCRYFSRKSGVLRYWHSAPYLTHSKLLEDKLIRPVDRSKETEKLLRSRLVYQSRKRGILETDLILSGFAKEYLSKYNVELLKEYDNLLNEADWDILYWCTGERQAPEHWLNSRVLRDLKEYLSSKNGVVRFMPEL.

It belongs to the SDHAF2 family. Interacts with the flavoprotein subunit within the SDH catalytic dimer.

It localises to the mitochondrion matrix. In terms of biological role, plays an essential role in the assembly of succinate dehydrogenase (SDH), an enzyme complex (also referred to as respiratory complex II) that is a component of both the tricarboxylic acid (TCA) cycle and the mitochondrial electron transport chain, and which couples the oxidation of succinate to fumarate with the reduction of ubiquinone (coenzyme Q) to ubiquinol. Required for flavinylation (covalent attachment of FAD) of the flavoprotein subunit of the SDH catalytic dimer. The chain is Succinate dehydrogenase assembly factor 2, mitochondrial from Schizosaccharomyces japonicus (strain yFS275 / FY16936) (Fission yeast).